Reading from the N-terminus, the 104-residue chain is UPF0125 protein PSPTO_4512 (104 aa).

The protein belongs to the UPF0125 (RnfH) family.

In Pseudomonas syringae pv. tomato (strain ATCC BAA-871 / DC3000), this protein is UPF0125 protein PSPTO_4512.